Here is a 353-residue protein sequence, read N- to C-terminus: MNEPRIVAPQPTTSEQYFEETLRPRRLAEYIGQDRVKESLAIAIRAAQERGEPLDHLLFYGPPGLGKTTLAGIIAAEMGVNLRITSGPAIERPGDLVSILTNLRPGDVLFIDEIHRLNRLVEEILYPAMEDFAVDLVIGKGPAARSVRIALPRFTLVGATTRLALLTSPLRDRFGATYRLDFYDTAALRAIVERAARILQVPITSDGAEEIARRGRGTPRIAIRLLKRVRDYAQVIGDGTITRELARLALDQLAVDELGLDEVDRLILRTLVEKFDGGPVGIQTLAAATSEEPDTIESVYEPYLLQLGFLQRTPRGRIATRRAYEHLGLTYPENRLQLEIPFEHAASERSSDA.

Residues 1–183 form a large ATPase domain (RuvB-L) region; it reads MNEPRIVAPQ…FGATYRLDFY (183 aa). ATP is bound by residues L22, R23, G64, K67, T68, T69, 130-132, R173, Y183, and R220; that span reads EDF. T68 contacts Mg(2+). Residues 184–254 form a small ATPAse domain (RuvB-S) region; the sequence is DTAALRAIVE…LARLALDQLA (71 aa). The head domain (RuvB-H) stretch occupies residues 257–353; the sequence is ELGLDEVDRL…HAASERSSDA (97 aa). Positions 312 and 317 each coordinate DNA.

It belongs to the RuvB family. Homohexamer. Forms an RuvA(8)-RuvB(12)-Holliday junction (HJ) complex. HJ DNA is sandwiched between 2 RuvA tetramers; dsDNA enters through RuvA and exits via RuvB. An RuvB hexamer assembles on each DNA strand where it exits the tetramer. Each RuvB hexamer is contacted by two RuvA subunits (via domain III) on 2 adjacent RuvB subunits; this complex drives branch migration. In the full resolvosome a probable DNA-RuvA(4)-RuvB(12)-RuvC(2) complex forms which resolves the HJ.

Its subcellular location is the cytoplasm. The catalysed reaction is ATP + H2O = ADP + phosphate + H(+). Its function is as follows. The RuvA-RuvB-RuvC complex processes Holliday junction (HJ) DNA during genetic recombination and DNA repair, while the RuvA-RuvB complex plays an important role in the rescue of blocked DNA replication forks via replication fork reversal (RFR). RuvA specifically binds to HJ cruciform DNA, conferring on it an open structure. The RuvB hexamer acts as an ATP-dependent pump, pulling dsDNA into and through the RuvAB complex. RuvB forms 2 homohexamers on either side of HJ DNA bound by 1 or 2 RuvA tetramers; 4 subunits per hexamer contact DNA at a time. Coordinated motions by a converter formed by DNA-disengaged RuvB subunits stimulates ATP hydrolysis and nucleotide exchange. Immobilization of the converter enables RuvB to convert the ATP-contained energy into a lever motion, pulling 2 nucleotides of DNA out of the RuvA tetramer per ATP hydrolyzed, thus driving DNA branch migration. The RuvB motors rotate together with the DNA substrate, which together with the progressing nucleotide cycle form the mechanistic basis for DNA recombination by continuous HJ branch migration. Branch migration allows RuvC to scan DNA until it finds its consensus sequence, where it cleaves and resolves cruciform DNA. The polypeptide is Holliday junction branch migration complex subunit RuvB (Thermomicrobium roseum (strain ATCC 27502 / DSM 5159 / P-2)).